Reading from the N-terminus, the 222-residue chain is Probable fimbrial chaperone EcpB (222 aa).

The N-terminal stretch at 1–20 is a signal peptide; the sequence is MKKHLLPLALLFSGISPAQA.

The protein belongs to the EcpB/EcpE family.

Functionally, part of the ecpRABCDE operon, which encodes the E.coli common pilus (ECP). ECP is found in both commensal and pathogenic strains and plays a dual role in early-stage biofilm development and host cell recognition. In Escherichia coli (strain K12), this protein is Probable fimbrial chaperone EcpB (ecpB).